Here is a 143-residue protein sequence, read N- to C-terminus: Nucleoside diphosphate kinase (143 aa).

6 residues coordinate ATP: Lys11, Phe59, Arg87, Thr93, Arg104, and Asn114. His117 (pros-phosphohistidine intermediate) is an active-site residue.

This sequence belongs to the NDK family. In terms of assembly, homotetramer. Mg(2+) is required as a cofactor.

The protein resides in the cytoplasm. It catalyses the reaction a 2'-deoxyribonucleoside 5'-diphosphate + ATP = a 2'-deoxyribonucleoside 5'-triphosphate + ADP. The enzyme catalyses a ribonucleoside 5'-diphosphate + ATP = a ribonucleoside 5'-triphosphate + ADP. Its function is as follows. Major role in the synthesis of nucleoside triphosphates other than ATP. The ATP gamma phosphate is transferred to the NDP beta phosphate via a ping-pong mechanism, using a phosphorylated active-site intermediate. The sequence is that of Nucleoside diphosphate kinase from Clostridium perfringens (strain ATCC 13124 / DSM 756 / JCM 1290 / NCIMB 6125 / NCTC 8237 / Type A).